A 734-amino-acid chain; its full sequence is Photosystem I P700 chlorophyll a apoprotein A2 (734 aa).

Transmembrane regions (helical) follow at residues 46 to 69 (IFASHFGQLAIIFLWTSGNLFHVA), 135 to 158 (LYVGSIFLLVLAGLFLFAGWLHLQ), 175 to 199 (LNHHLAGLFGVSSLAWTGHLVHVAI), 273 to 291 (MAHHHLAIAVVFILAGHMY), 330 to 353 (LHFQLGLALASVGTICSLVAQHMY), 369 to 395 (ASLYTHHQYIAGFIMCGAFAHGAIFFV), 417 to 439 (AIISHLSWVSLFLGFHTLGLYVH), and 517 to 535 (FLVHHAIALGLHTTTLILV). The [4Fe-4S] cluster site is built by Cys559 and Cys568. Transmembrane regions (helical) follow at residues 575 to 596 (AFYLAVFWMLNTIGWVTFYFHW) and 643 to 665 (LSVWAWMFLFGHLIYATGFMFLI). His654, Met662, and Tyr670 together coordinate chlorophyll a. Trp671 provides a ligand contact to phylloquinone. Residues 707 to 727 (LVGLTHFSVGYVLTYAAFLIA) form a helical membrane-spanning segment.

Belongs to the PsaA/PsaB family. The PsaA/B heterodimer binds the P700 chlorophyll special pair and subsequent electron acceptors. PSI consists of a core antenna complex that captures photons, and an electron transfer chain that converts photonic excitation into a charge separation. The eukaryotic PSI reaction center is composed of at least 11 subunits. P700 is a chlorophyll a/chlorophyll a' dimer, A0 is one or more chlorophyll a, A1 is one or both phylloquinones and FX is a shared 4Fe-4S iron-sulfur center. serves as cofactor.

The protein localises to the plastid. It localises to the chloroplast thylakoid membrane. It catalyses the reaction reduced [plastocyanin] + hnu + oxidized [2Fe-2S]-[ferredoxin] = oxidized [plastocyanin] + reduced [2Fe-2S]-[ferredoxin]. Functionally, psaA and PsaB bind P700, the primary electron donor of photosystem I (PSI), as well as the electron acceptors A0, A1 and FX. PSI is a plastocyanin/cytochrome c6-ferredoxin oxidoreductase, converting photonic excitation into a charge separation, which transfers an electron from the donor P700 chlorophyll pair to the spectroscopically characterized acceptors A0, A1, FX, FA and FB in turn. Oxidized P700 is reduced on the lumenal side of the thylakoid membrane by plastocyanin or cytochrome c6. The protein is Photosystem I P700 chlorophyll a apoprotein A2 of Chlorella vulgaris (Green alga).